The primary structure comprises 632 residues: MLIGHSLHHMRPTAVDSSLPTSATSQTISNTKSRLDPHRVRELTFIGVGSSVAYLLNELNGRFADSGVTTPFLGKVSIVGKDDSWAENVRGKGYINHQTEIISQWDQQVPKYDPNYAARAEFSASNRRQLTRTVELGAEHLKAQVTGISRLDDGCFRINLDNGQILQSRQIVLGTGAGPHTSIWNSVTSHTQAEKRLDNIKLHEQKALRGKVLDLDEFMRASDASPQTFAGKTVVIHGPNAGIDAAERAGELGANAVWFTRSTNPVLLDGNQLKFAPELAKSAIHKVDKLDIRPTKLENGFALRLHYSSLGQDSREPKKVLDADYYVYAMGQDIHKPGSAAAILGSLLDHLEPIYDYDQVYSDQPFKTVIGLQSRGSNSDNGLIIVGAAVAQLATNVQHSYKDHALDRILEEMTRLPEKQTEKLSQMLLEGAPSVQIQTYLKTWQLDSGQPPDKQVLQNQVENYLAARDYFQRQTNEQKGNLDGVAAEVKNQTLTEVASVIVSPQLGTIKASAAALSGLMPAYVANGENNFTTDNRTMLRAGIAARYPNIGNAEASAFIDEVVTLRHLNSQRFIEKVAGEMMDKGAQPLVSLRPPVLGVPASVRTAYEAYLHALNSGAHDGTPLSQRWLPKK.

The tract at residues 13–34 is disordered; that stretch reads TAVDSSLPTSATSQTISNTKSR. The segment covering 15–32 has biased composition (polar residues); the sequence is VDSSLPTSATSQTISNTK.

It localises to the secreted. The protein is Effector protein hopAD1 (hopAD1) of Pseudomonas syringae pv. tomato (strain ATCC BAA-871 / DC3000).